Reading from the N-terminus, the 372-residue chain is Y-box-binding protein 3 (372 aa).

A disordered region spans residues 1–82 (MSEAGEATTT…LATAAGSEDA (82 aa)). Serine 2 is modified (N-acetylserine). Phosphoserine is present on serine 2. The segment covering 7–28 (ATTTTTTTLPQAPTEAAAAAPQ) has biased composition (low complexity). Position 34 is a phosphoserine (serine 34). Residues 35 to 79 (PVGSGAPQAAAPAPAAHVAGNPGGDAAPAATGTAAAASLATAAGS) show a composition bias toward low complexity. The CSD domain maps to 93–157 (GTVKWFNVRN…GEKGAEAANV (65 aa)). Serine 134, serine 201, serine 203, and serine 204 each carry phosphoserine. The tract at residues 181–372 (YYGRRRGPPR…APPTQQSSAE (192 aa)) is disordered. Residues 222–238 (QLRRPQYRPQYRQRRFP) are compositionally biased toward basic residues. Arginine 251 bears the Omega-N-methylarginine mark. Positions 314 to 324 (QQATSGPNQPS) are enriched in polar residues. Serine 324 bears the Phosphoserine mark. The residue at position 326 (arginine 326) is an Omega-N-methylarginine. Positions 327–340 (RGYRRPYNYRRRPR) are enriched in basic residues. Serine 346, serine 369, and serine 370 each carry phosphoserine.

Found in a mRNP complex with YBX2. Interacts with RRP1B. Highly expressed in skeletal muscle and heart.

Its subcellular location is the cytoplasm. It is found in the nucleus. Functionally, binds to the GM-CSF promoter. Seems to act as a repressor. Also binds to full-length mRNA and to short RNA sequences containing the consensus site 5'-UCCAUCA-3'. May have a role in translation repression. This is Y-box-binding protein 3 (YBX3) from Homo sapiens (Human).